A 216-amino-acid polypeptide reads, in one-letter code: Thylakoid lumenal 16.5 kDa protein, chloroplastic (216 aa).

The N-terminal 38 residues, 1 to 38 (MAKSLLCSSTLNPFFSTTLSSSKKNQIAYSGNSKNQTS), are a transit peptide targeting the chloroplast. The N-terminal 35 residues, 39–73 (SSLLWKRRELSLGFMSSLVAIGLVSNDRRRHDANA), are a transit peptide targeting the thylakoid.

Its subcellular location is the plastid. It is found in the chloroplast thylakoid lumen. This chain is Thylakoid lumenal 16.5 kDa protein, chloroplastic, found in Arabidopsis thaliana (Mouse-ear cress).